Reading from the N-terminus, the 1055-residue chain is Ephrin type-B receptor 2 (1055 aa).

Positions 1 to 18 (MALRRLGAALLLLPLLAA) are cleaved as a signal peptide. Topologically, residues 19 to 543 (VEETLMDSTT…QTSIQEKLPL (525 aa)) are extracellular. An Eph LBD domain is found at 20–202 (EETLMDSTTA…FYRKCPRIIQ (183 aa)). 2 disulfides stabilise this stretch: C62–C184 and C97–C107. N-linked (GlcNAc...) asparagine glycans are attached at residues N265, N336, N428, and N482. Fibronectin type-III domains follow at residues 324-434 (IPSA…TNQA) and 435-530 (APSA…TMTE). The chain crosses the membrane as a helical span at residues 544-564 (IIGSSAAGLVFLIAVVVIAIV). Residues 565 to 1055 (CNRRGFERAD…KESNDCSCGG (491 aa)) lie on the Cytoplasmic side of the membrane. Residues 621–884 (VKIEQVIGAG…QIVNTLDKMI (264 aa)) form the Protein kinase domain. ATP is bound by residues 627–635 (IGAGEFGEV) and K653. The active-site Proton acceptor is the D746. K891 participates in a covalent cross-link: Glycyl lysine isopeptide (Lys-Gly) (interchain with G-Cter in ubiquitin). Positions 913-977 (TSFNTVDEWL…LNSIQVMRAQ (65 aa)) constitute an SAM domain. Phosphoserine is present on residues S983 and V984. A PDZ-binding (in isoform 2) motif is present at residues 984-986 (VEG). Positions 990-1055 (ARRPRATGRT…KESNDCSCGG (66 aa)) are disordered. Basic residues predominate over residues 991–1002 (RRPRATGRTKRC). Basic and acidic residues predominate over residues 1025 to 1049 (KKTDPGRGREIQGIFFKEDSHKESN).

It belongs to the protein kinase superfamily. Tyr protein kinase family. Ephrin receptor subfamily. In terms of assembly, heterotetramer upon binding of the ligand. The heterotetramer is composed of an ephrin dimer and a receptor dimer. Interacts (via PDZ-binding motif) with GRIP1 and PICK1 (via PDZ domain). Interacts with ARHGEF15; mediates ARHGEF15 phosphorylation, ubiquitination and degradation by the proteasome. Interacts with AQP1; involved in endolymph production in the inner ear. Interacts with SPSB1 and SPSB4. The phosphorylated form interacts with RASA1 (via SH2 domain 1). Interacts with EFNA5. Interacts with SH2D3C. Post-translationally, autophosphorylated; ligand binding stimulates autophosphorylation on tyrosine residues. Polyubiquitinated; ligand binding stimulates ubiquitination. Ubiquitinated by RNF186 at Lys-891, mainly through 'Lys-27'-linked polyubiquitin chains. Ubiquitinated by CRL2(KLHDC2) E3 ligase complex. In terms of processing, ligand binding induces cleavage by matrix metalloproteinases (MMPs) such as MMP7/MMP9, producing an EphB2/N-terminal fragment (NTF) and a C-terminal long fragment (EphB2-LF). EphB2-LF is further cleaved by MMPs, producing EphB2/CTF1 which is further cleaved by the PS1/gamma-secretase producing EphB2/CTF2. Brain, heart, lung, kidney, placenta, pancreas, liver and skeletal muscle. Preferentially expressed in fetal brain.

The protein resides in the cell membrane. It is found in the cell projection. Its subcellular location is the axon. It localises to the dendrite. It catalyses the reaction L-tyrosyl-[protein] + ATP = O-phospho-L-tyrosyl-[protein] + ADP + H(+). In terms of biological role, receptor tyrosine kinase which binds promiscuously transmembrane ephrin-B family ligands residing on adjacent cells, leading to contact-dependent bidirectional signaling into neighboring cells. The signaling pathway downstream of the receptor is referred to as forward signaling while the signaling pathway downstream of the ephrin ligand is referred to as reverse signaling. Functions in axon guidance during development. Involved in the guidance of commissural axons, that form a major interhemispheric connection between the 2 temporal lobes of the cerebral cortex. Also involved in guidance of contralateral inner ear efferent growth cones at the midline and of retinal ganglion cell axons to the optic disk. In addition to axon guidance, also regulates dendritic spines development and maturation and stimulates the formation of excitatory synapses. Upon activation by EFNB1, abolishes the ARHGEF15-mediated negative regulation on excitatory synapse formation. Controls other aspects of development including angiogenesis, palate development and in inner ear development through regulation of endolymph production. Forward and reverse signaling through the EFNB2/EPHB2 complex regulate movement and adhesion of cells that tubularize the urethra and septate the cloaca. May function as a tumor suppressor. May be involved in the regulation of platelet activation and blood coagulation. This Homo sapiens (Human) protein is Ephrin type-B receptor 2 (EPHB2).